We begin with the raw amino-acid sequence, 301 residues long: Mitochondrial thiamine pyrophosphate carrier 1 (301 aa).

Solcar repeat units follow at residues valine 15–serine 102, serine 115–leucine 200, and arginine 206–phenylalanine 293. 6 consecutive transmembrane segments (helical) span residues alanine 20 to leucine 38, valine 79 to isoleucine 99, leucine 121 to leucine 141, isoleucine 172 to tryptophan 192, valine 207 to phenylalanine 227, and isoleucine 252 to serine 272.

The protein belongs to the mitochondrial carrier (TC 2.A.29) family.

The protein resides in the mitochondrion inner membrane. In terms of biological role, mitochondrial transporter that mediates uptake of thiamine pyrophosphate (ThPP) into mitochondria. In Candida albicans (strain SC5314 / ATCC MYA-2876) (Yeast), this protein is Mitochondrial thiamine pyrophosphate carrier 1 (TPC1).